Consider the following 264-residue polypeptide: Apolipoprotein A-I (264 aa).

The first 18 residues, 1 to 18, serve as a signal peptide directing secretion; sequence MKAVVLAVAVLFLTGSQA. 2 tandem repeats follow at residues 67 to 88 and 89 to 110. The 10 X approximate tandem repeats stretch occupies residues 67-264; that stretch reads LNLLENWDTL…DQITKHVTTQ (198 aa). Methionine 109 is subject to Methionine sulfoxide. The stretch at 111–121 is one 3; half-length repeat; that stretch reads KDLEKVKKKVQ. Repeat copies occupy residues 122-143, 144-165, and 166-187. A 7; truncated repeat occupies 188–207; it reads TYTEEMGQILAERLGAIKES. Residue methionine 193 is modified to Methionine sulfoxide. Repeat 8 spans residues 208–229; the sequence is TSLAEYQTKASEHLRTFSKKAK. One copy of the 9; half-length repeat lies at 230 to 240; it reads PILEDLRQGLL. Residues 241 to 264 form repeat 10; that stretch reads PVAENFKTNIKNTFDQITKHVTTQ.

This sequence belongs to the apolipoprotein A1/A4/E family. As to quaternary structure, homodimer. Interacts with APOA1BP and CLU. Component of a sperm activating protein complex (SPAP), consisting of APOA1, an immunoglobulin heavy chain, an immunoglobulin light chain and albumin. Interacts with NDRG1. Interacts with SCGB3A2. Interacts with NAXE and YJEFN3. In terms of processing, glycosylated. Palmitoylated. Post-translationally, phosphorylation sites are present in the extracellular medium.

The protein localises to the secreted. Its function is as follows. Participates in the reverse transport of cholesterol from tissues to the liver for excretion by promoting cholesterol efflux from tissues and by acting as a cofactor for the lecithin cholesterol acyltransferase (LCAT). As part of the SPAP complex, activates spermatozoa motility. The polypeptide is Apolipoprotein A-I (Apoa1) (Fukomys damarensis (Damaraland mole rat)).